The primary structure comprises 227 residues: Small heat shock protein hspG3 (227 aa).

Positions 31-227 (NKRVDIIPSM…SSNTIKININ (197 aa)) constitute a sHSP domain. The segment at 119-164 (QQQQLENSNKENDEPSIEEFEEDVKSKSELNKTTLNTTENKDEDKT) is disordered.

Belongs to the small heat shock protein (HSP20) family.

The sequence is that of Small heat shock protein hspG3 (hspG3) from Dictyostelium discoideum (Social amoeba).